Consider the following 706-residue polypeptide: Polycomb protein SCMH1 (706 aa).

MBT repeat units follow at residues 28-126 (FTWD…LQPP) and 134-235 (SSWP…LQPP). 2 disordered regions span residues 233 to 350 (QPPG…TVPS) and 576 to 595 (GSDR…RDPS). Composition is skewed to basic residues over residues 272–283 (RGRKPGKKRGRT) and 304–319 (FPKK…RKPR). Positions 329-340 (PTTSTPEPDTST) are enriched in low complexity. Positions 576–591 (GSDRHLESRDPPRLSG) are enriched in basic and acidic residues. In terms of domain architecture, SAM spans 597–662 (WTVEDVMQFV…SFHIDRLKQV (66 aa)).

The protein belongs to the SCM family. Associates with a PRC1-like complex. Interacts with the SAM domain of PHC1 via its SAM domain in vitro. In terms of tissue distribution, most abundant in testis. Moderate levels detected in heart, brain, lung, liver, skeletal muscle and kidney and lower levels in spleen.

The protein localises to the nucleus. Its function is as follows. Associates with Polycomb group (PcG) multiprotein complexes; the complex class is required to maintain the transcriptionally repressive state of some genes. The polypeptide is Polycomb protein SCMH1 (Mus musculus (Mouse)).